A 359-amino-acid chain; its full sequence is Phosphate acyltransferase (359 aa).

Belongs to the PlsX family. As to quaternary structure, homodimer. Probably interacts with PlsY.

Its subcellular location is the cytoplasm. It catalyses the reaction a fatty acyl-[ACP] + phosphate = an acyl phosphate + holo-[ACP]. It participates in lipid metabolism; phospholipid metabolism. Functionally, catalyzes the reversible formation of acyl-phosphate (acyl-PO(4)) from acyl-[acyl-carrier-protein] (acyl-ACP). This enzyme utilizes acyl-ACP as fatty acyl donor, but not acyl-CoA. The polypeptide is Phosphate acyltransferase (Salmonella heidelberg (strain SL476)).